A 147-amino-acid chain; its full sequence is Hemoglobin subunit epsilon (147 aa).

A Globin domain is found at 3-147 (HFTAEEKSTI…VATALAHKYH (145 aa)). A phosphoserine mark is found at serine 14 and serine 51. Histidine 64 and histidine 93 together coordinate heme b.

Belongs to the globin family. Heterotetramer of two alpha chains and two epsilon chains in early embryonic hemoglobin Gower-2; two zeta chains and two epsilon chains in early embryonic hemoglobin Gower-1. Red blood cells.

Functionally, the epsilon chain is a beta-type chain of early mammalian embryonic hemoglobin. In Cheirogaleus medius (Fat-tailed dwarf lemur), this protein is Hemoglobin subunit epsilon (HBE1).